Reading from the N-terminus, the 547-residue chain is Puff-specific protein Bx42 (547 aa).

Residues 177 to 343 (AQYIRYTPSQ…AREERAGLRN (167 aa)) are SNW. Residues S227 and S235 each carry the phosphoserine modification. Disordered regions lie at residues 333–398 (RARE…ERDI) and 486–547 (QFSG…SKRD). 2 stretches are compositionally biased toward basic and acidic residues: residues 358 to 398 (EVRE…ERDI) and 526 to 539 (KRAEEKNNERSSHS).

It belongs to the SNW family.

It is found in the nucleus. In terms of biological role, may play a role in chromatin structure and function. This Drosophila melanogaster (Fruit fly) protein is Puff-specific protein Bx42 (Bx42).